The chain runs to 539 residues: MHDKILILDFGSQVTQLIARRVREAHVYCEIHPNDVSDDFVREFAPKAIILSGSHASTYEDHQLRAPQAVWDLGVPVLGICYGMQTMAVQLGGKVEWSDHREFGYAEVRAHGHTNLLKDIEDFRTPEGHGMLKVWMSHGDKVAGLPPGFKLMASTPSCPIAGMADEARGYYAVQFHPEVTHTAKGRQMLERFVLGIAGCKPDWVMRDHIEEAVAKIREQVGDEEVILGLSGGVDSSVAAALIHRAIGDQLTCVFVDHGLLRQDEGKLVMEMFVGRLHAKVVHIDASEQFLGHLAGVTDPEQKRKIIGREFVEVFQAEARKLSNAKWLAQGTIYPDVVESGGTKTKKATTIKSHHNVGGLPETLGLKLLEPLRDLFKDEVRELGVALGLPPEMVYRHPFPGPGLGVRILGEVKRDYADLLRRADAIFIEELRKTLATEQDAAAGLCEPDQVGKSWYDLTSQAFAVFLPVKSVGVMGDGRTYDYVVALRAVQTTDFMTAHWAHLPYALLGRCSNRIINEVRGLNRVVYDVSGKPPATIEWE.

In terms of domain architecture, Glutamine amidotransferase type-1 spans 4 to 202 (KILILDFGSQ…VLGIAGCKPD (199 aa)). Catalysis depends on C81, which acts as the Nucleophile. Catalysis depends on residues H176 and E178. The 193-residue stretch at 203-395 (WVMRDHIEEA…LGLPPEMVYR (193 aa)) folds into the GMPS ATP-PPase domain. ATP is bound at residue 230 to 236 (SGGVDSS).

Homodimer.

It carries out the reaction XMP + L-glutamine + ATP + H2O = GMP + L-glutamate + AMP + diphosphate + 2 H(+). Its pathway is purine metabolism; GMP biosynthesis; GMP from XMP (L-Gln route): step 1/1. Its function is as follows. Catalyzes the synthesis of GMP from XMP. The sequence is that of GMP synthase [glutamine-hydrolyzing] from Cupriavidus necator (strain ATCC 17699 / DSM 428 / KCTC 22496 / NCIMB 10442 / H16 / Stanier 337) (Ralstonia eutropha).